Here is a 472-residue protein sequence, read N- to C-terminus: Squamosa promoter-binding-like protein 18 (472 aa).

The segment at 89–110 (AKVPPSTSTLKRPRGGGGGGGG) is disordered. The SBP-type zinc-finger motif lies at 112–189 (CPSCAVDGCK…DGHNRRRRKP (78 aa)). Zn(2+)-binding residues include cysteine 115, cysteine 120, cysteine 137, histidine 140, cysteine 156, cysteine 159, histidine 163, and cysteine 175. The Bipartite nuclear localization signal signature appears at 172 to 188 (KRSCRKRLDGHNRRRRK). Disordered regions lie at residues 179–218 (LDGH…RPEP), 233–261 (SHHH…TAAF), and 358–381 (SVDV…HHHH). Over residues 192–209 (DSMSSGSFMTSQQGTRFA) the composition is skewed to polar residues. Over residues 252-261 (SPSSATTAAF) the composition is skewed to low complexity.

In terms of tissue distribution, expressed in young panicles.

The protein localises to the nucleus. In terms of biological role, trans-acting factor that binds specifically to the consensus nucleotide sequence 5'-TNCGTACAA-3'. May be involved in panicle development. In Oryza sativa subsp. japonica (Rice), this protein is Squamosa promoter-binding-like protein 18 (SPL18).